Consider the following 294-residue polypeptide: Protein CHLOROPLAST J-LIKE DOMAIN 1, chloroplastic (294 aa).

The N-terminal 58 residues, 1 to 58, are a transit peptide targeting the chloroplast; sequence MAPALSTSCSSVMAFSTSNALRYHHPQISLRNSLRAPKSPSFVRLPLGKVLQSRIVIR. Over 59 to 164 the chain is Stromal; that stretch reads AASSAAGNPQ…GPRFSRSSKN (106 aa). Positions 74 to 152 are J-like domain; sequence NPYEVLGVNP…IKYADKQPII (79 aa). Residues 165 to 182 form a helical membrane-spanning segment; the sequence is DMLINLAISVVFSAWIAI. Residues 183 to 233 are Chloroplast intermembrane-facing; the sequence is KRNVEYKPLQFMSFVFVYRIFEKLKSFEAPSSPIYNEEGEESGRGLRMGKR. A helical transmembrane segment spans residues 234 to 256; it reads LLRSLSLVFGSILLASLAYTGFL. Residues 257–275 are Stromal-facing; the sequence is NGIEYMGYSIPMVLYNNQE. The chain crosses the membrane as a helical span at residues 276–293; the sequence is LIVTASSAFMLYVIASFY. Position 294 (Arg294) is a topological domain, chloroplast intermembrane.

Interacts (via J-like domain) with ARC6 (via J domain).

Its subcellular location is the plastid. The protein resides in the chloroplast inner membrane. Probably involved in the regulation of the fatty acid metabolic process in chloroplasts, especially chloroplastic galactolipids monogalactosyldiacylglycerol (MGDG) and digalactosyldiacylglycerol (DGDG). This Arabidopsis thaliana (Mouse-ear cress) protein is Protein CHLOROPLAST J-LIKE DOMAIN 1, chloroplastic.